A 330-amino-acid chain; its full sequence is Peroxidase 70 (330 aa).

The N-terminal stretch at 1-24 is a signal peptide; sequence MRSFTNLNPCYVLLPFFLVLATNA. Cystine bridges form between Cys-43/Cys-119, Cys-76/Cys-81, Cys-125/Cys-326, and Cys-202/Cys-234. His-74 acts as the Proton acceptor in catalysis. Residues Asp-75, Val-78, Gly-80, Asp-82, and Ser-84 each coordinate Ca(2+). Pro-165 provides a ligand contact to substrate. His-195 is a binding site for heme b. Thr-196 lines the Ca(2+) pocket. The Ca(2+) site is built by Asp-247, Ser-250, and Asp-255.

The protein belongs to the peroxidase family. Classical plant (class III) peroxidase subfamily. Requires heme b as cofactor. Ca(2+) is required as a cofactor.

It is found in the secreted. The catalysed reaction is 2 a phenolic donor + H2O2 = 2 a phenolic radical donor + 2 H2O. Functionally, removal of H(2)O(2), oxidation of toxic reductants, biosynthesis and degradation of lignin, suberization, auxin catabolism, response to environmental stresses such as wounding, pathogen attack and oxidative stress. These functions might be dependent on each isozyme/isoform in each plant tissue. In Arabidopsis thaliana (Mouse-ear cress), this protein is Peroxidase 70 (PER70).